The sequence spans 317 residues: Melanocyte-stimulating hormone receptor (317 aa).

Residues 1–37 lie on the Extracellular side of the membrane; the sequence is MPVQGSQRRLLGSLNSTPTATPKLGLAANQTGAQCLE. A glycan (N-linked (GlcNAc...) asparagine) is linked at Asn-29. A helical transmembrane segment spans residues 38–63; sequence VSIPDGLFLSLGLVSLVENVLVVAAI. At 64 to 72 the chain is on the cytoplasmic side; that stretch reads ARNRNLHSP. Residues 73 to 93 form a helical membrane-spanning segment; it reads MYCFICCLALSDLLVSGSNML. Residues 94–118 are Extracellular-facing; the sequence is ETAVILLLEAGALAARAAVVQQLDN. Residues 119–140 traverse the membrane as a helical segment; that stretch reads VIDVITCSSMLSSLCFLGAIAM. At 141–163 the chain is on the cytoplasmic side; the sequence is DRYISIFYALRYHSIVTLPRARG. Residues 164–183 traverse the membrane as a helical segment; sequence VVAAIWVASILFSTLFIAYY. Residues 184-191 lie on the Extracellular side of the membrane; sequence DHVAVLLC. A helical membrane pass occupies residues 192–211; the sequence is LVVFFLAMLVLMAVLYVHML. Over 212-240 the chain is Cytoplasmic; it reads ARACQHAQGIAQLHKRQRPAHQGVGLKGA. The chain crosses the membrane as a helical span at residues 241–266; the sequence is ATLTILLGIFFLCWGPFFLHLTLIVL. Over 267–279 the chain is Extracellular; it reads CPQHPTCSCIFKN. Residues 280–300 form a helical membrane-spanning segment; it reads FNLFLALIICNAIIDPLIYAF. The Cytoplasmic portion of the chain corresponds to 301 to 317; the sequence is RSQELRRTLKKVLLCSW. Cys-315 is lipidated: S-palmitoyl cysteine.

The protein belongs to the G-protein coupled receptor 1 family. In terms of assembly, interacts with MGRN1, but does not undergo MGRN1-mediated ubiquitination; this interaction competes with GNAS-binding and thus inhibits agonist-induced cAMP production. Interacts with OPN3; the interaction results in a decrease in MC1R-mediated cAMP signaling and ultimately a decrease in melanin production in melanocytes.

The protein resides in the cell membrane. Its function is as follows. Receptor for MSH (alpha, beta and gamma) and ACTH. The activity of this receptor is mediated by G proteins which activate adenylate cyclase. Mediates melanogenesis, the production of eumelanin (black/brown) and phaeomelanin (red/yellow), via regulation of cAMP signaling in melanocytes. The sequence is that of Melanocyte-stimulating hormone receptor (MC1R) from Presbytis comata (Grizzled leaf monkey).